A 240-amino-acid polypeptide reads, in one-letter code: Large ribosomal subunit protein uL2 (240 aa).

The segment covering 1 to 12 (MGRRIQGQRRGR) has biased composition (basic residues). 2 disordered regions span residues 1-21 (MGRR…RAPS) and 198-240 (VDHP…GSNK). Residues 221–231 (PPGRKVGDIAS) are compositionally biased toward basic and acidic residues.

Belongs to the universal ribosomal protein uL2 family. In terms of assembly, part of the 50S ribosomal subunit. Forms a bridge to the 30S subunit in the 70S ribosome.

One of the primary rRNA binding proteins. Required for association of the 30S and 50S subunits to form the 70S ribosome, for tRNA binding and peptide bond formation. It has been suggested to have peptidyltransferase activity; this is somewhat controversial. Makes several contacts with the 16S rRNA in the 70S ribosome. The polypeptide is Large ribosomal subunit protein uL2 (Halorubrum lacusprofundi (strain ATCC 49239 / DSM 5036 / JCM 8891 / ACAM 34)).